The sequence spans 447 residues: MYRIKNENLDFKIDSLGECKQNNPLIDFYASEGSSHFVNEKNKIKFSVYRNEDKGDRYEDVLLEKAGPREKIYFVPRHVKAAITTCGGLCPGFNDVIRSIVRTLWKIYGVRNIYGVKFGYQGLLPESNSPFINLNPDVVDDINKFGGTILGSSRGGIKPVEIVDTLERMNINMIFNIGGDGTQKGSLLIAEEIEKRNLKIAVVGIPKTVDNDFMFVQKSFGFETAVEQAVAAVAGAHFEANSAYNGIGLVKVMGRDSGFIAAHTALSSNDVNFCLIPELDFDIEGPNGFLVHLERRLLEKESLEEIPHAVILIAEGAGQKYFDHFPKKKDDSGNLLYEDIGLYIKDKITEYFKAKNIQFTLKYIDPSYIIRSSPANASDSLYCARLGSNAVHAAMAGKTKMLISLWSTKFVHIPIKMAVIDRNKVNPNGSFWRDVLSSTGQPISMKN.

Residues glycine 88, arginine 154–glycine 155, and glycine 179–threonine 182 contribute to the ATP site. Aspartate 180 serves as a coordination point for Mg(2+). Residues threonine 208–aspartate 210, methionine 253–arginine 255, glutamate 315, and tyrosine 368–arginine 371 contribute to the substrate site. The Proton acceptor role is filled by aspartate 210.

It belongs to the phosphofructokinase type A (PFKA) family. PPi-dependent PFK group II subfamily. Atypical ATP-dependent clade 'X' sub-subfamily. Homodimer. The cofactor is Mg(2+).

The protein localises to the cytoplasm. It carries out the reaction beta-D-fructose 6-phosphate + ATP = beta-D-fructose 1,6-bisphosphate + ADP + H(+). It functions in the pathway carbohydrate degradation; glycolysis; D-glyceraldehyde 3-phosphate and glycerone phosphate from D-glucose: step 3/4. Its function is as follows. Catalyzes the phosphorylation of D-fructose 6-phosphate to fructose 1,6-bisphosphate by ATP, the first committing step of glycolysis. This Borreliella burgdorferi (strain ATCC 35210 / DSM 4680 / CIP 102532 / B31) (Borrelia burgdorferi) protein is ATP-dependent 6-phosphofructokinase.